The sequence spans 263 residues: Glutamate/glutamine/aspartate/asparagine transport ATP-binding protein BztD (263 aa).

The region spanning 23 to 257 is the ABC transporter domain; sequence IQISQMNKWY…PQSERTKQFL (235 aa). Residue 55-62 participates in ATP binding; the sequence is GPSGSGKS.

Belongs to the ABC transporter superfamily. As to quaternary structure, bztB and BztC form a heterodimer which can form a membrane complex with a homodimer of BztD.

It localises to the cell membrane. Part of a binding-protein-dependent transport system for glutamate, glutamine, aspartate, asparagine. Probably responsible for energy coupling to the transport system. This chain is Glutamate/glutamine/aspartate/asparagine transport ATP-binding protein BztD (bztD), found in Rhodobacter capsulatus (strain ATCC BAA-309 / NBRC 16581 / SB1003).